A 220-amino-acid chain; its full sequence is Large ribosomal subunit protein uL3 (220 aa).

Positions Phe127–Gly155 are disordered.

This sequence belongs to the universal ribosomal protein uL3 family. Part of the 50S ribosomal subunit. Forms a cluster with proteins L14 and L19.

Its function is as follows. One of the primary rRNA binding proteins, it binds directly near the 3'-end of the 23S rRNA, where it nucleates assembly of the 50S subunit. The protein is Large ribosomal subunit protein uL3 of Staphylococcus aureus (strain JH9).